Here is an 89-residue protein sequence, read N- to C-terminus: Small ribosomal subunit protein uS15 (89 aa).

The protein belongs to the universal ribosomal protein uS15 family. As to quaternary structure, part of the 30S ribosomal subunit. Forms a bridge to the 50S subunit in the 70S ribosome, contacting the 23S rRNA.

Functionally, one of the primary rRNA binding proteins, it binds directly to 16S rRNA where it helps nucleate assembly of the platform of the 30S subunit by binding and bridging several RNA helices of the 16S rRNA. In terms of biological role, forms an intersubunit bridge (bridge B4) with the 23S rRNA of the 50S subunit in the ribosome. The chain is Small ribosomal subunit protein uS15 from Geobacillus stearothermophilus (Bacillus stearothermophilus).